Here is a 103-residue protein sequence, read N- to C-terminus: Flagellar hook-basal body complex protein FliE (103 aa).

It belongs to the FliE family.

The protein localises to the bacterial flagellum basal body. The chain is Flagellar hook-basal body complex protein FliE from Helicobacter hepaticus (strain ATCC 51449 / 3B1).